The primary structure comprises 101 residues: Urease subunit beta (101 aa).

The protein belongs to the urease beta subunit family. Heterotrimer of UreA (gamma), UreB (beta) and UreC (alpha) subunits. Three heterotrimers associate to form the active enzyme.

It localises to the cytoplasm. It carries out the reaction urea + 2 H2O + H(+) = hydrogencarbonate + 2 NH4(+). The protein operates within nitrogen metabolism; urea degradation; CO(2) and NH(3) from urea (urease route): step 1/1. This chain is Urease subunit beta, found in Pseudomonas aeruginosa (strain LESB58).